A 738-amino-acid polypeptide reads, in one-letter code: Catalase-peroxidase 2 (738 aa).

Positions 1 to 26 are cleaved as a signal peptide; sequence MKRTLPTLSALALSMSLALAAGQTQA. A cross-link (tryptophyl-tyrosyl-methioninium (Trp-Tyr) (with M-252)) is located at residues 104 to 226; that stretch reads WHSAGVYRIF…LGATQMGLIY (123 aa). Catalysis depends on His105, which acts as the Proton acceptor. Residues 226 to 252 constitute a cross-link (tryptophyl-tyrosyl-methioninium (Tyr-Met) (with W-104)); that stretch reads YVNPEGPNGVPDPLAAARDIRETFGRM. His267 serves as a coordination point for heme b.

Belongs to the peroxidase family. Peroxidase/catalase subfamily. Homodimer or homotetramer. Heme b is required as a cofactor. Formation of the three residue Trp-Tyr-Met cross-link is important for the catalase, but not the peroxidase activity of the enzyme.

It catalyses the reaction H2O2 + AH2 = A + 2 H2O. The catalysed reaction is 2 H2O2 = O2 + 2 H2O. Functionally, bifunctional enzyme with both catalase and broad-spectrum peroxidase activity. The chain is Catalase-peroxidase 2 from Shewanella amazonensis (strain ATCC BAA-1098 / SB2B).